The following is a 601-amino-acid chain: Elongation factor 4 (601 aa).

A tr-type G domain is found at 5–187; sequence EHIRNFSIIA…AIVERLPAPE (183 aa). Residues 17–22 and 134–137 each bind GTP; these read DHGKST and NKVD.

Belongs to the TRAFAC class translation factor GTPase superfamily. Classic translation factor GTPase family. LepA subfamily.

Its subcellular location is the cell inner membrane. It carries out the reaction GTP + H2O = GDP + phosphate + H(+). Required for accurate and efficient protein synthesis under certain stress conditions. May act as a fidelity factor of the translation reaction, by catalyzing a one-codon backward translocation of tRNAs on improperly translocated ribosomes. Back-translocation proceeds from a post-translocation (POST) complex to a pre-translocation (PRE) complex, thus giving elongation factor G a second chance to translocate the tRNAs correctly. Binds to ribosomes in a GTP-dependent manner. This Nitratidesulfovibrio vulgaris (strain DSM 19637 / Miyazaki F) (Desulfovibrio vulgaris) protein is Elongation factor 4.